The sequence spans 215 residues: FMN-dependent NADH:quinone oxidoreductase (215 aa).

17 to 19 (SAS) serves as a coordination point for FMN.

It belongs to the azoreductase type 1 family. Homodimer. It depends on FMN as a cofactor.

It catalyses the reaction 2 a quinone + NADH + H(+) = 2 a 1,4-benzosemiquinone + NAD(+). The catalysed reaction is N,N-dimethyl-1,4-phenylenediamine + anthranilate + 2 NAD(+) = 2-(4-dimethylaminophenyl)diazenylbenzoate + 2 NADH + 2 H(+). Quinone reductase that provides resistance to thiol-specific stress caused by electrophilic quinones. Functionally, also exhibits azoreductase activity. Catalyzes the reductive cleavage of the azo bond in aromatic azo compounds to the corresponding amines. The protein is FMN-dependent NADH:quinone oxidoreductase of Clostridium botulinum (strain Eklund 17B / Type B).